Reading from the N-terminus, the 375-residue chain is Histidine biosynthesis bifunctional protein HisB (375 aa).

The histidinol-phosphatase stretch occupies residues 1-168; sequence MTPILFVDRD…GIAHELADAP (168 aa). Asp-8 acts as the Nucleophile in catalysis. Mg(2+) contacts are provided by Asp-8, Asp-10, and Asp-128. Residue Asp-10 is the Proton donor of the active site. Positions 169 to 375 are imidazoleglycerol-phosphate dehydratase; it reads RRALVQRNTK…TALPTTKGTL (207 aa).

In the N-terminal section; belongs to the histidinol-phosphatase family. It in the C-terminal section; belongs to the imidazoleglycerol-phosphate dehydratase family. The cofactor is Mg(2+).

It is found in the cytoplasm. It catalyses the reaction D-erythro-1-(imidazol-4-yl)glycerol 3-phosphate = 3-(imidazol-4-yl)-2-oxopropyl phosphate + H2O. It carries out the reaction L-histidinol phosphate + H2O = L-histidinol + phosphate. Its pathway is amino-acid biosynthesis; L-histidine biosynthesis; L-histidine from 5-phospho-alpha-D-ribose 1-diphosphate: step 6/9. It participates in amino-acid biosynthesis; L-histidine biosynthesis; L-histidine from 5-phospho-alpha-D-ribose 1-diphosphate: step 8/9. The protein is Histidine biosynthesis bifunctional protein HisB of Xanthomonas axonopodis pv. citri (strain 306).